The sequence spans 79 residues: Protein S100-G (79 aa).

Position 2 is an N-acetylserine (Ser-2). 2 EF-hand domains span residues Ile-13–Ser-48 and Lys-45–Gln-79. Gln-26 and Glu-31 together coordinate Ca(2+). Phosphoserine is present on Ser-42. Ca(2+) contacts are provided by Asp-58, Asn-60, Asp-62, Glu-64, and Glu-69.

Belongs to the S-100 family.

The polypeptide is Protein S100-G (S100G) (Bos taurus (Bovine)).